We begin with the raw amino-acid sequence, 496 residues long: UDP-glycosyltransferase 84A2 (496 aa).

Histidine 23 (proton acceptor) is an active-site residue. An an anthocyanidin-binding site is contributed by histidine 23. UDP-alpha-D-glucose-binding residues include glutamine 352, histidine 367, tryptophan 370, asparagine 371, serine 372, and glutamate 375. Glycine 390 is a binding site for an anthocyanidin. Residues aspartate 391 and glutamine 392 each coordinate UDP-alpha-D-glucose.

It belongs to the UDP-glycosyltransferase family. As to expression, expressed in roots, cotyledons, leaf veins and trichomes.

It catalyses the reaction (E)-sinapate + UDP-alpha-D-glucose = 1-O-(trans-sinapoyl)-beta-D-glucose + UDP. Functionally, sinapate glucosyltransferase (SGT) required for the biosynthesis of the glucose ester sinapoylglucose and subsequently sinapoylmalate and sinapoylcholine. Is the major SGT activity in plant. Plays an important role in sinapoylation of anthocyanins. Sinapoylglucose produced by UGT84A2 is a significant source of sinapoyl moieties for anthocyanins. Indole-3-butyric acid (IBA)-specific glucosyltransferase that catalyzes the glucosylation of the auxin IBA, but not indole-3-acetic acid (IAA). May be involved in flowering regulation through IBA-mediated transcriptional repression of the auxin-response factors ARF6 and ARF8 and downstream flowering pathway genes. Can glucosylate the phytotoxic xenobiotic compound 2,4,5-trichlorophenol (TCP). The protein is UDP-glycosyltransferase 84A2 of Arabidopsis thaliana (Mouse-ear cress).